Consider the following 175-residue polypeptide: ATP synthase subunit b (175 aa).

A helical membrane pass occupies residues 19 to 35 (GLIFWTTVTFLIVLFIL).

This sequence belongs to the ATPase B chain family. As to quaternary structure, F-type ATPases have 2 components, F(1) - the catalytic core - and F(0) - the membrane proton channel. F(1) has five subunits: alpha(3), beta(3), gamma(1), delta(1), epsilon(1). F(0) has four main subunits: a(1), b(2) and c(10-14). The alpha and beta chains form an alternating ring which encloses part of the gamma chain. F(1) is attached to F(0) by a central stalk formed by the gamma and epsilon chains, while a peripheral stalk is formed by the delta and b chains.

The protein resides in the cell inner membrane. F(1)F(0) ATP synthase produces ATP from ADP in the presence of a proton or sodium gradient. F-type ATPases consist of two structural domains, F(1) containing the extramembraneous catalytic core and F(0) containing the membrane proton channel, linked together by a central stalk and a peripheral stalk. During catalysis, ATP synthesis in the catalytic domain of F(1) is coupled via a rotary mechanism of the central stalk subunits to proton translocation. In terms of biological role, component of the F(0) channel, it forms part of the peripheral stalk, linking F(1) to F(0). This is ATP synthase subunit b from Chlorobium phaeobacteroides (strain BS1).